A 406-amino-acid polypeptide reads, in one-letter code: Serine hydroxymethyltransferase (406 aa).

(6S)-5,6,7,8-tetrahydrofolate contacts are provided by residues Leu111 and Gly115–Leu117. Position 220 is an N6-(pyridoxal phosphate)lysine (Lys220). (6S)-5,6,7,8-tetrahydrofolate is bound at residue Ser340–Phe342.

This sequence belongs to the SHMT family. Homodimer. The cofactor is pyridoxal 5'-phosphate.

The protein resides in the cytoplasm. The enzyme catalyses (6R)-5,10-methylene-5,6,7,8-tetrahydrofolate + glycine + H2O = (6S)-5,6,7,8-tetrahydrofolate + L-serine. It participates in one-carbon metabolism; tetrahydrofolate interconversion. Its pathway is amino-acid biosynthesis; glycine biosynthesis; glycine from L-serine: step 1/1. Its function is as follows. Catalyzes the reversible interconversion of serine and glycine with tetrahydrofolate (THF) serving as the one-carbon carrier. This reaction serves as the major source of one-carbon groups required for the biosynthesis of purines, thymidylate, methionine, and other important biomolecules. Also exhibits THF-independent aldolase activity toward beta-hydroxyamino acids, producing glycine and aldehydes, via a retro-aldol mechanism. This Mycoplasma genitalium (strain ATCC 33530 / DSM 19775 / NCTC 10195 / G37) (Mycoplasmoides genitalium) protein is Serine hydroxymethyltransferase.